A 341-amino-acid chain; its full sequence is UDP-glucuronic acid decarboxylase 5 (341 aa).

The tract at residues 1–21 (MASSDKQTSPKPPPSPSPLRN) is disordered. 60–85 (DNYFTGSKDNLKKWIGHPRFELIRHD) lines the NAD(+) pocket. Arg-169 contacts substrate. The active-site Proton acceptor is the Tyr-172. Residue 172–176 (YDEGK) coordinates NAD(+). Residue Asn-201 coordinates substrate. Arg-213 lines the NAD(+) pocket. Residues 214–218 (VVSNF), 231–238 (QKPGTQTR), and 298–302 (DPRQR) each bind substrate.

The protein belongs to the NAD(P)-dependent epimerase/dehydratase family. UDP-glucuronic acid decarboxylase subfamily. Requires NAD(+) as cofactor.

Its subcellular location is the cytoplasm. It carries out the reaction UDP-alpha-D-glucuronate + H(+) = UDP-alpha-D-xylose + CO2. Its pathway is nucleotide-sugar biosynthesis; UDP-alpha-D-xylose biosynthesis; UDP-alpha-D-xylose from UDP-alpha-D-glucuronate: step 1/1. Its function is as follows. Catalyzes the NAD-dependent decarboxylation of UDP-glucuronic acid to UDP-xylose. Necessary for the biosynthesis of the core tetrasaccharide in glycosaminoglycan biosynthesis. This Arabidopsis thaliana (Mouse-ear cress) protein is UDP-glucuronic acid decarboxylase 5 (UXS5).